The chain runs to 210 residues: Cytochrome c biogenesis ATP-binding export protein CcmA (210 aa).

Residues 1–208 (MHLNQLVISH…KVRTLSLDQF (208 aa)) form the ABC transporter domain. 38-45 (GHNGIGKT) contributes to the ATP binding site.

It belongs to the ABC transporter superfamily. CcmA exporter (TC 3.A.1.107) family. As to quaternary structure, the complex is composed of two ATP-binding proteins (CcmA) and two transmembrane proteins (CcmB).

It localises to the cell inner membrane. It carries out the reaction heme b(in) + ATP + H2O = heme b(out) + ADP + phosphate + H(+). Its function is as follows. Part of the ABC transporter complex CcmAB involved in the biogenesis of c-type cytochromes; once thought to export heme, this seems not to be the case, but its exact role is uncertain. Responsible for energy coupling to the transport system. The polypeptide is Cytochrome c biogenesis ATP-binding export protein CcmA (Haemophilus ducreyi (strain 35000HP / ATCC 700724)).